The chain runs to 156 residues: ATP synthase subunit b (156 aa).

Residues 12–32 (VAFLIFVLFCMKFVWPPVIAA) traverse the membrane as a helical segment.

The protein belongs to the ATPase B chain family. As to quaternary structure, F-type ATPases have 2 components, F(1) - the catalytic core - and F(0) - the membrane proton channel. F(1) has five subunits: alpha(3), beta(3), gamma(1), delta(1), epsilon(1). F(0) has three main subunits: a(1), b(2) and c(10-14). The alpha and beta chains form an alternating ring which encloses part of the gamma chain. F(1) is attached to F(0) by a central stalk formed by the gamma and epsilon chains, while a peripheral stalk is formed by the delta and b chains.

It is found in the cell inner membrane. F(1)F(0) ATP synthase produces ATP from ADP in the presence of a proton or sodium gradient. F-type ATPases consist of two structural domains, F(1) containing the extramembraneous catalytic core and F(0) containing the membrane proton channel, linked together by a central stalk and a peripheral stalk. During catalysis, ATP synthesis in the catalytic domain of F(1) is coupled via a rotary mechanism of the central stalk subunits to proton translocation. In terms of biological role, component of the F(0) channel, it forms part of the peripheral stalk, linking F(1) to F(0). In Pseudomonas fluorescens (strain Pf0-1), this protein is ATP synthase subunit b.